We begin with the raw amino-acid sequence, 616 residues long: Protein phosphatase EYA4 (616 aa).

Residue methionine 1 is modified to N-acetylmethionine. Disordered stretches follow at residues 1 to 66, 186 to 211, and 277 to 345; these read MEDT…VTTN, SQTQ…PGQT, and ADGT…DSDL. Residues lysine 14 and lysine 52 each participate in a glycyl lysine isopeptide (Lys-Gly) (interchain with G-Cter in SUMO2) cross-link. The segment covering 56–66 has biased composition (low complexity); that stretch reads SGLSSTSVTTN. Over residues 277-311 the composition is skewed to polar residues; it reads ADGTSSSTSTYQLQESLQGLTSQPGEFDTVQSPST. Serine 338 is subject to Phosphoserine. The active-site Nucleophile is the aspartate 352. Residues aspartate 352, aspartate 354, and aspartate 580 each coordinate Mg(2+). The Proton donor role is filled by aspartate 354.

The protein belongs to the HAD-like hydrolase superfamily. EYA family. Interacts with SIX3; translocates EYA4 from the cytoplasm to the nucleus and promotes activation of their target genes. The cofactor is Mg(2+). In the embryo, expressed mainly in the craniofacial mesenchyme, dermamyotome and limb.

Its subcellular location is the cytoplasm. The protein localises to the nucleus. It carries out the reaction O-phospho-L-tyrosyl-[protein] + H2O = L-tyrosyl-[protein] + phosphate. Its function is as follows. Tyrosine phosphatase that specifically dephosphorylates 'Tyr-142' of histone H2AX (H2AXY142ph). 'Tyr-142' phosphorylation of histone H2AX plays a central role in DNA repair and acts as a mark that distinguishes between apoptotic and repair responses to genotoxic stress. Promotes efficient DNA repair by dephosphorylating H2AX, promoting the recruitment of DNA repair complexes containing MDC1. Its function as histone phosphatase probably explains its role in transcription regulation during organogenesis. May be involved in development of the eye. This Mus musculus (Mouse) protein is Protein phosphatase EYA4 (Eya4).